An 85-amino-acid chain; its full sequence is Large ribosomal subunit protein eL43 (85 aa).

Zn(2+) is bound by residues C32, C35, C50, and C53. Residues C32–C53 form a C4-type zinc finger.

It belongs to the eukaryotic ribosomal protein eL43 family. In terms of assembly, component of the large ribosomal subunit.

Its subcellular location is the cytoplasm. Functionally, component of the large ribosomal subunit. The ribosome is a large ribonucleoprotein complex responsible for the synthesis of proteins in the cell. The sequence is that of Large ribosomal subunit protein eL43 (rpl37a) from Myxine glutinosa (Atlantic hagfish).